A 217-amino-acid chain; its full sequence is Large ribosomal subunit protein uL3 (217 aa).

Residues 135–154 form a disordered region; sequence ATHGNSLSHRAPGSIGQCQT. At Gln-153 the chain carries N5-methylglutamine.

Belongs to the universal ribosomal protein uL3 family. In terms of assembly, part of the 50S ribosomal subunit. Forms a cluster with proteins L14 and L19. Methylated by PrmB.

Functionally, one of the primary rRNA binding proteins, it binds directly near the 3'-end of the 23S rRNA, where it nucleates assembly of the 50S subunit. The protein is Large ribosomal subunit protein uL3 of Coxiella burnetii (strain CbuG_Q212) (Coxiella burnetii (strain Q212)).